The sequence spans 145 residues: MTTRREGRELALQALYSKDLVLQDANTTLKRITESFSEGEEPTLSVNSKAYAFASELVNGVVSNLQAIDSRIAEKSKHWSMARMARVDLNILRLAVFELLYRPDIPKNVTMNEAIEVAKKFGADDSASFVNGILDEIASTVTDKE.

The protein belongs to the NusB family.

Involved in transcription antitermination. Required for transcription of ribosomal RNA (rRNA) genes. Binds specifically to the boxA antiterminator sequence of the ribosomal RNA (rrn) operons. The polypeptide is Transcription antitermination protein NusB (Citrifermentans bemidjiense (strain ATCC BAA-1014 / DSM 16622 / JCM 12645 / Bem) (Geobacter bemidjiensis)).